Reading from the N-terminus, the 64-residue chain is Large ribosomal subunit protein bL35 (64 aa).

Basic residues predominate over residues 1–42 (MPKAKTHSGASKRFRRTGTGKIVRQKANRRHLLEHKSSKRTR). The segment at 1–64 (MPKAKTHSGA…TKRVKSLLNG (64 aa)) is disordered.

It belongs to the bacterial ribosomal protein bL35 family.

This chain is Large ribosomal subunit protein bL35, found in Mycobacterium ulcerans (strain Agy99).